We begin with the raw amino-acid sequence, 327 residues long: Xylosidase/arabinosidase 43A (327 aa).

The active-site Proton acceptor is the Asp-12. The active-site Proton donor is Glu-228.

Belongs to the glycosyl hydrolase 43 family.

It localises to the secreted. It carries out the reaction Hydrolysis of (1-&gt;4)-beta-D-xylans, to remove successive D-xylose residues from the non-reducing termini.. The catalysed reaction is Hydrolysis of terminal non-reducing alpha-L-arabinofuranoside residues in alpha-L-arabinosides.. Activity is inhibited by Ag(+), Li(+), Pb(2+), Cu(2+), Cr(3+), Co(3+), Fe(3+), Ni(2+), Mg(2+), Zn(2+), EDTA and SDS; but not by Mn(2+), Ca(2+) and beta-mercaptoethanol. Functionally, bifunctional beta-xylosidase/alpha-L-arabinosidases with a low level of xylanase activity. Is most active on 4-nitrophenyl beta-D-xylopyranoside (pNPX) (defined as 100%), moderate on p-nitrophenyl-alpha-L-arabinofuranoside (pNPA) (23.7%), and weak on beechwood xylan (15.9%) and birchwood xylan (15.2%). Is able to attack xylooligosacchardies with degrees of polymerisation of 2-5, releasing the amounts of reducing sugars in the order of xylopentose &gt; xylotetraose &gt; xylotriose &gt; xylobiose, i.e. the rate of xylose released from xylooligosacchardies increased with the chain length. No activity is detected in the presence of carboxymethyl cellulose-sodium (CMC-Na), sugar beet arabinan, AZCL-arabinan (debranched), 4-nitrophenyl a-D - galactopyranoside, 2-nitrophenyl beta-D-galactopyranoside, and 4-nitrophenyl alpha-D-glucopyranoside. This is Xylosidase/arabinosidase 43A from Humicola insolens (Soft-rot fungus).